We begin with the raw amino-acid sequence, 284 residues long: UPF0294 protein VV2535 (284 aa).

Belongs to the UPF0294 family.

It is found in the cytoplasm. In Vibrio vulnificus (strain YJ016), this protein is UPF0294 protein VV2535.